The following is a 500-amino-acid chain: Lysine--tRNA ligase (500 aa).

Residues glutamate 410 and glutamate 417 each contribute to the Mg(2+) site.

The protein belongs to the class-II aminoacyl-tRNA synthetase family. Homodimer. Requires Mg(2+) as cofactor.

It is found in the cytoplasm. It carries out the reaction tRNA(Lys) + L-lysine + ATP = L-lysyl-tRNA(Lys) + AMP + diphosphate. The sequence is that of Lysine--tRNA ligase from Shewanella putrefaciens (strain CN-32 / ATCC BAA-453).